A 267-amino-acid chain; its full sequence is 3-methyl-2-oxobutanoate hydroxymethyltransferase (267 aa).

Mg(2+) is bound by residues D46 and D85. Residues D46–S47, D85, and K115 contribute to the 3-methyl-2-oxobutanoate site. A Mg(2+)-binding site is contributed by E117. The Proton acceptor role is filled by E184.

Belongs to the PanB family. In terms of assembly, homodecamer; pentamer of dimers. Requires Mg(2+) as cofactor.

The protein resides in the cytoplasm. It catalyses the reaction 3-methyl-2-oxobutanoate + (6R)-5,10-methylene-5,6,7,8-tetrahydrofolate + H2O = 2-dehydropantoate + (6S)-5,6,7,8-tetrahydrofolate. Its pathway is cofactor biosynthesis; (R)-pantothenate biosynthesis; (R)-pantoate from 3-methyl-2-oxobutanoate: step 1/2. Functionally, catalyzes the reversible reaction in which hydroxymethyl group from 5,10-methylenetetrahydrofolate is transferred onto alpha-ketoisovalerate to form ketopantoate. The polypeptide is 3-methyl-2-oxobutanoate hydroxymethyltransferase (Geotalea daltonii (strain DSM 22248 / JCM 15807 / FRC-32) (Geobacter daltonii)).